The chain runs to 271 residues: Zinc finger protein 501 (271 aa).

9 C2H2-type zinc fingers span residues 22-44 (SKCSECGKFFTQRSSLTQHQRIH), 50-72 (YVCSECGSCFRKQSNLTQHLRIH), 78-100 (YKCNECEKAFQTKAILVQHLRIH), 106-128 (YKCNECGKAFCQSPSLIKHQRIH), 134-156 (YKCTECGKAFSQSICLTRHQRSH), 162-184 (FKCNECGKAFNQSACLMQHQRIH), 190-212 (YTCTECGKAFTQNSSLVEHERTH), 218-240 (YKCSECEKTFRKQAHLSEHYRIH), and 246-268 (YECVGCGKSFRHSSALLRHQRLH).

It belongs to the krueppel C2H2-type zinc-finger protein family.

The protein localises to the nucleus. It localises to the nucleolus. Its function is as follows. May be involved in transcriptional regulation. Essential for Golgi structural integrity. The protein is Zinc finger protein 501 (ZNF501) of Homo sapiens (Human).